The chain runs to 339 residues: Deubiquitinase and deneddylase Dub2 (339 aa).

The helical transmembrane segment at 36-56 (IIIALFLIVISCGLILCAYTF) threads the bilayer. Residues H203, D220, and C282 contribute to the active site.

It belongs to the peptidase C48 family.

The protein localises to the secreted. It is found in the host cell. It localises to the membrane. Functionally, effector proteins function to alter host cell physiology and promote bacterial survival in host tissues. This protease possesses deubiquitinating and deneddylating activities. This is Deubiquitinase and deneddylase Dub2 (cdu2) from Chlamydia trachomatis serovar L2 (strain ATCC VR-902B / DSM 19102 / 434/Bu).